A 945-amino-acid polypeptide reads, in one-letter code: MSNKKADSKPQAKYPVNLLDTPFPMRGDLPKREPQWVKEWEARGIYEKIRAASQGRPKFILHDGPPYANGDIHLGHAVNKILKDIVVKSRNMAGFDAPYVPGWDCHGMPIEIQIEKQFGKSLPAAEVMSKARAYATEQIEKQKVGFKRLGVLGDWANPYKTMNFVNEAEEIRALGKIIEKGYVYRGLKPVNWCFDCGSALAEAEVEYKDRTDPTIDVMFAFAEPEKTAHAFGLPALPRAEGGIVIWTTTPWTIPANQALNLHPEIIYALVDTERGLLIIAEERVEACMTDFKLTGRVVATAPGVKLANLRFHHPLASAHPGYKRTAPVYLGDYVTTDTGTGVVHSSPAYGIEDFMSCKAHGMTDSDFINPVMGDGRYIESLPLFGGLSIWDANPKIVDALNAAGSLLRSEKYTHSYMHCWRHKTPIIYRATSQWFAGMDVTPQDGGKTLRETALEGVDATAFYPSWGKQRLFSMIANRPDWTLSRQRQWGVPMAFFVHKETGELHPRTLELLEEVAKRVEQSGIEAWQSLDPRELIGDDANLYEKNRDTLDVWFDSGTTHWHVLRGSHKDQLQFPADLYLEGSDQHRGWFHSSLLTASMIDGRAPYKGLLTHGFTVDGEGRKMSKSLGNGIDPHEVANRLGAEIIRLWIASTDYSGELAISEEILKRVTEGYRRIRNTLRFLLANLSDFDFAQHAVPVDEWLEIDRYAVAFSQQLQTELLGHYEKYEFHPVVAKLQTYCSEDLGGFYLDVLKDRLYTSAADSRARRSAQTALYHLTHGLLRVLAPFLSFTAEEAWKVFQPASDTIFTETYYAYPEVAGSAALIEKWALLRDVRGSVTKALEEARTANRIGSSLQAEVAVHASGARYDALTSLGDDLKFVLITSAATVVKVDDEAQESVDVAASKYQKCERCWHYREDVGAHAEHPTLCGRCFSNLFENGEIRSAA.

Positions 66-76 match the 'HIGH' region motif; it reads PYANGDIHLGH. Glu581 is a binding site for L-isoleucyl-5'-AMP. Positions 622–626 match the 'KMSKS' region motif; sequence KMSKS. Residue Lys625 coordinates ATP. Zn(2+) contacts are provided by Cys908, Cys911, Cys928, and Cys931.

Belongs to the class-I aminoacyl-tRNA synthetase family. IleS type 1 subfamily. In terms of assembly, monomer. Requires Zn(2+) as cofactor.

The protein resides in the cytoplasm. The catalysed reaction is tRNA(Ile) + L-isoleucine + ATP = L-isoleucyl-tRNA(Ile) + AMP + diphosphate. Functionally, catalyzes the attachment of isoleucine to tRNA(Ile). As IleRS can inadvertently accommodate and process structurally similar amino acids such as valine, to avoid such errors it has two additional distinct tRNA(Ile)-dependent editing activities. One activity is designated as 'pretransfer' editing and involves the hydrolysis of activated Val-AMP. The other activity is designated 'posttransfer' editing and involves deacylation of mischarged Val-tRNA(Ile). This is Isoleucine--tRNA ligase from Burkholderia cenocepacia (strain HI2424).